The primary structure comprises 156 residues: ATP synthase subunit b (156 aa).

A helical transmembrane segment spans residues 7 to 27 (LIGQLIAFAIFVWFCMKYVWP).

Belongs to the ATPase B chain family. In terms of assembly, F-type ATPases have 2 components, F(1) - the catalytic core - and F(0) - the membrane proton channel. F(1) has five subunits: alpha(3), beta(3), gamma(1), delta(1), epsilon(1). F(0) has three main subunits: a(1), b(2) and c(10-14). The alpha and beta chains form an alternating ring which encloses part of the gamma chain. F(1) is attached to F(0) by a central stalk formed by the gamma and epsilon chains, while a peripheral stalk is formed by the delta and b chains.

Its subcellular location is the cell inner membrane. Functionally, f(1)F(0) ATP synthase produces ATP from ADP in the presence of a proton or sodium gradient. F-type ATPases consist of two structural domains, F(1) containing the extramembraneous catalytic core and F(0) containing the membrane proton channel, linked together by a central stalk and a peripheral stalk. During catalysis, ATP synthesis in the catalytic domain of F(1) is coupled via a rotary mechanism of the central stalk subunits to proton translocation. Component of the F(0) channel, it forms part of the peripheral stalk, linking F(1) to F(0). This chain is ATP synthase subunit b, found in Histophilus somni (strain 129Pt) (Haemophilus somnus).